The following is a 406-amino-acid chain: Argininosuccinate synthase (406 aa).

Ala-9–Ser-17 contributes to the ATP binding site. Tyr-86 is a binding site for L-citrulline. Position 116 (Gly-116) interacts with ATP. The L-aspartate site is built by Thr-118, Asn-122, and Asp-123. An L-citrulline-binding site is contributed by Asn-122. Residues Arg-126, Ser-174, Ser-183, Glu-259, and Tyr-271 each coordinate L-citrulline.

It belongs to the argininosuccinate synthase family. Type 1 subfamily. In terms of assembly, homotetramer.

The protein resides in the cytoplasm. The catalysed reaction is L-citrulline + L-aspartate + ATP = 2-(N(omega)-L-arginino)succinate + AMP + diphosphate + H(+). The protein operates within amino-acid biosynthesis; L-arginine biosynthesis; L-arginine from L-ornithine and carbamoyl phosphate: step 2/3. The sequence is that of Argininosuccinate synthase from Geobacillus kaustophilus (strain HTA426).